A 297-amino-acid polypeptide reads, in one-letter code: Indole-3-glycerol phosphate synthase (297 aa).

It belongs to the TrpC family.

It carries out the reaction 1-(2-carboxyphenylamino)-1-deoxy-D-ribulose 5-phosphate + H(+) = (1S,2R)-1-C-(indol-3-yl)glycerol 3-phosphate + CO2 + H2O. Its pathway is amino-acid biosynthesis; L-tryptophan biosynthesis; L-tryptophan from chorismate: step 4/5. This Trichodesmium erythraeum (strain IMS101) protein is Indole-3-glycerol phosphate synthase.